We begin with the raw amino-acid sequence, 415 residues long: 3-isopropylmalate dehydratase large subunit (415 aa).

[4Fe-4S] cluster is bound by residues C295, C353, and C356.

This sequence belongs to the aconitase/IPM isomerase family. LeuC type 2 subfamily. In terms of assembly, heterodimer of LeuC and LeuD. The cofactor is [4Fe-4S] cluster.

The enzyme catalyses (2R,3S)-3-isopropylmalate = (2S)-2-isopropylmalate. The protein operates within amino-acid biosynthesis; L-leucine biosynthesis; L-leucine from 3-methyl-2-oxobutanoate: step 2/4. Catalyzes the isomerization between 2-isopropylmalate and 3-isopropylmalate, via the formation of 2-isopropylmaleate. The sequence is that of 3-isopropylmalate dehydratase large subunit from Pyrobaculum neutrophilum (strain DSM 2338 / JCM 9278 / NBRC 100436 / V24Sta) (Thermoproteus neutrophilus).